Here is a 337-residue protein sequence, read N- to C-terminus: MSCKSNTLAKNYTNHPLRINEIHLPWKPTIPNTHYEFVRAQVVDLLNELGLCEDKKERDRRDGVIMLASYMYPEAGPQELLFGTMYVLWLFFFDDIFDESKFLKEECNQAAERSLHIFRTGKAPEKNAKLNFSIVQLEDLLLRIFAMANDLAKSSDITARFMKSCEIYFVDGAVPMENFRQMKTLPKLEEYLAVRTIDGGAAACIACFEIVAHLDLSDDIVNEPRVLRMCEIAGQQIAYANDIYSYHREKLHNNSMNSLNIRCQTLSFEDALTEQIAQLNGWVQEFETLKQSLAESALWENSLKMYITGMENIVMGCKVWSESCTRYNLKSLLTVVV.

Mg(2+) is bound by residues Asp-94 and Asp-98. Positions 94-98 match the D(D/E)XX(D/E) motif motif; it reads DDIFD. Arg-195 lines the substrate pocket. Positions 241, 245, and 249 each coordinate Mg(2+). The short motif at 241–249 is the NSE motif element; the sequence is NDIYSYHRE. Residues 320 to 327 carry the WxxxxxRY motif motif; it reads WSESCTRY.

This sequence belongs to the terpene synthase family. Mg(2+) is required as a cofactor.

It carries out the reaction (2E,6E)-farnesyl diphosphate = alpha-muurolene + diphosphate. The catalysed reaction is (2E,6E)-farnesyl diphosphate = (-)-(E)-beta-caryophyllene + diphosphate. Its function is as follows. Terpene synthase that catalyzes the cyclization of farnesyl diphosphate (FPP) into alpha-muurolene, (-)-beta-caryophyllene, and one unidentified sesquiterpene. TPS4 shows only trace monoterpene synthase activity with geranyl diphosphate (GPP) as substrate and produces very small amounts of myrcene. P.polycephalum has a unique biology and these volatile terpenoids could function in internal communication of P.polycephalum, to mark the territory that have been explored, or they may be involved in chemotaxis. This is Terpene synthase 4 from Physarum polycephalum (Slime mold).